The chain runs to 89 residues: Small ribosomal subunit protein uS15 (89 aa).

It belongs to the universal ribosomal protein uS15 family. As to quaternary structure, part of the 30S ribosomal subunit. Forms a bridge to the 50S subunit in the 70S ribosome, contacting the 23S rRNA.

Its function is as follows. One of the primary rRNA binding proteins, it binds directly to 16S rRNA where it helps nucleate assembly of the platform of the 30S subunit by binding and bridging several RNA helices of the 16S rRNA. Forms an intersubunit bridge (bridge B4) with the 23S rRNA of the 50S subunit in the ribosome. The sequence is that of Small ribosomal subunit protein uS15 from Brucella abortus (strain S19).